The sequence spans 572 residues: Alpha-1D adrenergic receptor (572 aa).

The segment at M1–A77 is disordered. At M1 to Q95 the chain is on the extracellular side. Composition is skewed to gly residues over residues S23–G33 and A42–S61. N65 and N82 each carry an N-linked (GlcNAc...) asparagine glycan. A helical transmembrane segment spans residues G96–V121. At A122–Y133 the chain is on the cytoplasmic side. A helical membrane pass occupies residues F134–L159. Residues G160–C169 lie on the Extracellular side of the membrane. The helical transmembrane segment at D170–V192 threads the bilayer. Residues D193–A213 are Cytoplasmic-facing. A helical membrane pass occupies residues A214–P238. The Extracellular portion of the chain corresponds to V239–E251. Residues A252–C275 form a helical membrane-spanning segment. The Cytoplasmic segment spans residues R276 to K348. A helical transmembrane segment spans residues T349–L373. At F374 to S380 the chain is on the extracellular side. Residues E381–S405 traverse the membrane as a helical segment. The Cytoplasmic portion of the chain corresponds to S406–I572. A lipid anchor (S-palmitoyl cysteine) is attached at C419. Residues G444 to R488 form a disordered region. Low complexity predominate over residues A450–P468.

Belongs to the G-protein coupled receptor 1 family. Adrenergic receptor subfamily. ADRA1D sub-subfamily. As to quaternary structure, interacts with FLNA (via filamin repeat 21); increases PKA-mediated phosphorylation of FLNA. Post-translationally, palmitoylated. Palmitoylation by ZDHHC21 may increase the expression of the receptor and regulate downstream signaling.

The protein localises to the cell membrane. Functionally, this alpha-adrenergic receptor mediates its effect through the influx of extracellular calcium. In Homo sapiens (Human), this protein is Alpha-1D adrenergic receptor (ADRA1D).